The chain runs to 600 residues: Elongation factor 4 (600 aa).

The region spanning 4–186 (SKIRNFSIIA…EIVKKIPAPQ (183 aa)) is the tr-type G domain. Residues 16-21 (DHGKST) and 133-136 (NKID) each bind GTP.

It belongs to the TRAFAC class translation factor GTPase superfamily. Classic translation factor GTPase family. LepA subfamily.

Its subcellular location is the cell inner membrane. It carries out the reaction GTP + H2O = GDP + phosphate + H(+). Functionally, required for accurate and efficient protein synthesis under certain stress conditions. May act as a fidelity factor of the translation reaction, by catalyzing a one-codon backward translocation of tRNAs on improperly translocated ribosomes. Back-translocation proceeds from a post-translocation (POST) complex to a pre-translocation (PRE) complex, thus giving elongation factor G a second chance to translocate the tRNAs correctly. Binds to ribosomes in a GTP-dependent manner. The chain is Elongation factor 4 from Trichlorobacter lovleyi (strain ATCC BAA-1151 / DSM 17278 / SZ) (Geobacter lovleyi).